Consider the following 238-residue polypeptide: Small ribosomal subunit protein uS3 (238 aa).

The region spanning 39–107 is the KH type-2 domain; that stretch reads MREFIHDYAK…ELHLNIVEIR (69 aa). A compositionally biased stretch (basic and acidic residues) spans 212 to 222; that stretch reads PQAHDRRHSEA. The tract at residues 212–238 is disordered; that stretch reads PQAHDRRHSEAQEGAAPRPPRRDRERA.

This sequence belongs to the universal ribosomal protein uS3 family. In terms of assembly, part of the 30S ribosomal subunit. Forms a tight complex with proteins S10 and S14.

Binds the lower part of the 30S subunit head. Binds mRNA in the 70S ribosome, positioning it for translation. The protein is Small ribosomal subunit protein uS3 of Cereibacter sphaeroides (strain ATCC 17025 / ATH 2.4.3) (Rhodobacter sphaeroides).